Consider the following 358-residue polypeptide: Phosphoribosylformylglycinamidine cyclo-ligase (358 aa).

This sequence belongs to the AIR synthase family.

The protein localises to the cytoplasm. The catalysed reaction is 2-formamido-N(1)-(5-O-phospho-beta-D-ribosyl)acetamidine + ATP = 5-amino-1-(5-phospho-beta-D-ribosyl)imidazole + ADP + phosphate + H(+). The protein operates within purine metabolism; IMP biosynthesis via de novo pathway; 5-amino-1-(5-phospho-D-ribosyl)imidazole from N(2)-formyl-N(1)-(5-phospho-D-ribosyl)glycinamide: step 2/2. This chain is Phosphoribosylformylglycinamidine cyclo-ligase, found in Chromohalobacter salexigens (strain ATCC BAA-138 / DSM 3043 / CIP 106854 / NCIMB 13768 / 1H11).